The primary structure comprises 216 residues: UPF0193 protein EVG1 homolog (216 aa).

This sequence belongs to the UPF0193 (EVG1) family.

This is UPF0193 protein EVG1 homolog from Mus musculus (Mouse).